The sequence spans 311 residues: Thioredoxin reductase (311 aa).

35–42 (ERGIPGGQ) is a binding site for FAD. A disulfide bridge links cysteine 134 with cysteine 137. Position 277–286 (277–286 (DVRDKGLRQI)) interacts with FAD.

The protein belongs to the class-II pyridine nucleotide-disulfide oxidoreductase family. As to quaternary structure, homodimer. Requires FAD as cofactor.

It localises to the cytoplasm. It catalyses the reaction [thioredoxin]-dithiol + NADP(+) = [thioredoxin]-disulfide + NADPH + H(+). The sequence is that of Thioredoxin reductase (trxB) from Staphylococcus aureus (strain COL).